We begin with the raw amino-acid sequence, 343 residues long: S-adenosylmethionine:tRNA ribosyltransferase-isomerase (343 aa).

The protein belongs to the QueA family. As to quaternary structure, monomer.

The protein localises to the cytoplasm. It carries out the reaction 7-aminomethyl-7-carbaguanosine(34) in tRNA + S-adenosyl-L-methionine = epoxyqueuosine(34) in tRNA + adenine + L-methionine + 2 H(+). It participates in tRNA modification; tRNA-queuosine biosynthesis. Its function is as follows. Transfers and isomerizes the ribose moiety from AdoMet to the 7-aminomethyl group of 7-deazaguanine (preQ1-tRNA) to give epoxyqueuosine (oQ-tRNA). The polypeptide is S-adenosylmethionine:tRNA ribosyltransferase-isomerase (Syntrophotalea carbinolica (strain DSM 2380 / NBRC 103641 / GraBd1) (Pelobacter carbinolicus)).